Here is a 907-residue protein sequence, read N- to C-terminus: Leucine-rich repeat-containing G-protein coupled receptor 5 (907 aa).

An N-terminal signal peptide occupies residues 1-21 (MDTSRLGVLLSLPVLLQLATG). At 22 to 561 (GSSPRSGVLL…EHLLDGWLIR (540 aa)) the chain is on the extracellular side. Residues 25 to 66 (PRSGVLLRGCPTHCHCEPDGRMLLRVDCSDLGLSELPSNLSV) enclose the LRRNT domain. 2 disulfide bridges follow: Cys34–Cys40 and Cys38–Cys52. N-linked (GlcNAc...) asparagine glycosylation is found at Asn63 and Asn77. 16 LRR repeats span residues 67-90 (FTSY…PSLR), 91-112 (FLEE…AFTG), 115-136 (SLKV…ALQN), 139-160 (SLQS…CFSG), 163-184 (SLRH…AFRS), 187-208 (ALQA…AFGN), 211-232 (SLVV…CFDG), 235-256 (SLET…IRTL), 258-279 (NLKE…AFVG), 282-303 (SLIT…AFQH), 306-328 (ELRT…TGTA), 329-350 (NLES…VCNQ), 353-374 (NLQV…SVCQ), 375-396 (KLQK…TFQQ), 399-420 (SLRS…AFST), and 423-446 (SLIK…HGLT). N-linked (GlcNAc...) asparagine glycosylation is present at Asn208. A disulfide bond links Cys348 and Cys373. Cysteines 479 and 541 form a disulfide. Residue Asn500 is glycosylated (N-linked (GlcNAc...) asparagine). Residues 562–582 (IGVWTIAVLALTCNALVTSTV) traverse the membrane as a helical segment. Topologically, residues 583 to 593 (FRSPLYISPIK) are cytoplasmic. Residues 594–614 (LLIGVIAAVNMLTGVSSAVLA) form a helical membrane-spanning segment. Topologically, residues 615-638 (GVDAFTFGSFARHGAWWENGVGCH) are extracellular. A disulfide bond links Cys637 and Cys712. A helical transmembrane segment spans residues 639–659 (VIGFLSIFASESSVFLLTLAA). The Cytoplasmic segment spans residues 660–682 (LERGFSVKYSAKFETKAPFSSLK). The chain crosses the membrane as a helical span at residues 683–703 (VIILLCALLALTMAAVPLLGG). The Extracellular portion of the chain corresponds to 704-722 (SKYGASPLCLPLPFGEPST). The helical transmembrane segment at 723-743 (MGYMVALILLNSLCFLMMTIA) threads the bilayer. At 744–767 (YTKLYCNLDKGDLENIWDCSMVKH) the chain is on the cytoplasmic side. A helical membrane pass occupies residues 768-788 (IALLLFTNCILNCPVAFLSFS). Residues 789-802 (SLINLTFISPEVIK) are Extracellular-facing. Asn792 carries an N-linked (GlcNAc...) asparagine glycan. The helical transmembrane segment at 803–823 (FILLVVVPLPACLNPLLYILF) threads the bilayer. The Cytoplasmic portion of the chain corresponds to 824–907 (NPHFKEDLVS…LSSVAFVPCL (84 aa)).

The protein belongs to the G-protein coupled receptor 1 family. As to quaternary structure, identified in a complex composed of RNF43, LGR5 and RSPO1. Also interacts with other R-spondin ligands, including RSPO2, RSPO3 and RSPO4. Expressed in skeletal muscle, placenta, spinal cord, and various region of brain. Expressed at the base of crypts in colonic and small mucosa stem cells. In premalignant cancer expression is not restricted to the cript base. Overexpressed in cancers of the ovary, colon and liver.

The protein resides in the cell membrane. Its subcellular location is the golgi apparatus. It is found in the trans-Golgi network membrane. Functionally, receptor for R-spondins that potentiates the canonical Wnt signaling pathway and acts as a stem cell marker of the intestinal epithelium and the hair follicle. Upon binding to R-spondins (RSPO1, RSPO2, RSPO3 or RSPO4), associates with phosphorylated LRP6 and frizzled receptors that are activated by extracellular Wnt receptors, triggering the canonical Wnt signaling pathway to increase expression of target genes. In contrast to classical G-protein coupled receptors, does not activate heterotrimeric G-proteins to transduce the signal. Involved in the development and/or maintenance of the adult intestinal stem cells during postembryonic development. This is Leucine-rich repeat-containing G-protein coupled receptor 5 (LGR5) from Homo sapiens (Human).